Here is a 612-residue protein sequence, read N- to C-terminus: Elongation factor 4 (612 aa).

The 183-residue stretch at K11–T193 folds into the tr-type G domain. GTP is bound by residues D23–T28 and N140–D143.

This sequence belongs to the TRAFAC class translation factor GTPase superfamily. Classic translation factor GTPase family. LepA subfamily.

The protein resides in the cell membrane. It catalyses the reaction GTP + H2O = GDP + phosphate + H(+). In terms of biological role, required for accurate and efficient protein synthesis under certain stress conditions. May act as a fidelity factor of the translation reaction, by catalyzing a one-codon backward translocation of tRNAs on improperly translocated ribosomes. Back-translocation proceeds from a post-translocation (POST) complex to a pre-translocation (PRE) complex, thus giving elongation factor G a second chance to translocate the tRNAs correctly. Binds to ribosomes in a GTP-dependent manner. The chain is Elongation factor 4 from Latilactobacillus sakei subsp. sakei (strain 23K) (Lactobacillus sakei subsp. sakei).